The sequence spans 244 residues: Phosphoadenosine 5'-phosphosulfate reductase (244 aa).

Cysteine 239 functions as the Nucleophile; cysteine thiosulfonate intermediate in the catalytic mechanism.

Belongs to the PAPS reductase family. CysH subfamily.

The protein localises to the cytoplasm. It carries out the reaction [thioredoxin]-disulfide + sulfite + adenosine 3',5'-bisphosphate + 2 H(+) = [thioredoxin]-dithiol + 3'-phosphoadenylyl sulfate. Its pathway is sulfur metabolism; hydrogen sulfide biosynthesis; sulfite from sulfate: step 3/3. In terms of biological role, catalyzes the formation of sulfite from phosphoadenosine 5'-phosphosulfate (PAPS) using thioredoxin as an electron donor. This is Phosphoadenosine 5'-phosphosulfate reductase from Salmonella schwarzengrund (strain CVM19633).